A 705-amino-acid polypeptide reads, in one-letter code: Polyribonucleotide nucleotidyltransferase (705 aa).

Residues D485 and D491 each contribute to the Mg(2+) site. The KH domain occupies 552-611 (PRVYTMTIAPEKIRDVIGAGGKTINKIIGETGVQIDIKEDGKIYVMSSDSVGANRALKMI). One can recognise an S1 motif domain in the interval 621-689 (GEIYLGKVTR…DQGRINLSRR (69 aa)).

The protein belongs to the polyribonucleotide nucleotidyltransferase family. Mg(2+) is required as a cofactor.

It is found in the cytoplasm. The enzyme catalyses RNA(n+1) + phosphate = RNA(n) + a ribonucleoside 5'-diphosphate. Functionally, involved in mRNA degradation. Catalyzes the phosphorolysis of single-stranded polyribonucleotides processively in the 3'- to 5'-direction. The polypeptide is Polyribonucleotide nucleotidyltransferase (Clostridium tetani (strain Massachusetts / E88)).